We begin with the raw amino-acid sequence, 125 residues long: Large ribosomal subunit protein uL30 (125 aa).

The interval 1–61 is large ribosomal subunit protein uL30; that stretch reads MSKLKVKLLR…HLVGVAYRID (61 aa). The unknown stretch occupies residues 62–125; the sequence is FSGDIPTVER…KNWKGEEVEL (64 aa).

This sequence belongs to the universal ribosomal protein uL30 family. In terms of assembly, part of the 50S ribosomal subunit.

This is Large ribosomal subunit protein uL30 from Aquifex aeolicus (strain VF5).